The sequence spans 477 residues: Enolase 1, chloroplastic (477 aa).

The transit peptide at Met-1–Gln-41 directs the protein to the chloroplast. Substrate is bound by residues His-203 and Glu-212. The active-site Proton donor is Glu-255. Mg(2+) is bound by residues Asp-290, Glu-340, and Asp-365. Substrate is bound by residues Glu-340 and Asp-365. Lys-390 (proton acceptor) is an active-site residue. Substrate-binding positions include Ser-417–Ser-420 and Lys-441. Position 476 is a phosphoserine (Ser-476).

Belongs to the enolase family. It depends on Mg(2+) as a cofactor. Highly expressed in young roots, young siliques, and shoot apex. Lowly expressed in young leaves, stems and cotyledons.

Its subcellular location is the plastid. It localises to the chloroplast. The enzyme catalyses (2R)-2-phosphoglycerate = phosphoenolpyruvate + H2O. The protein operates within carbohydrate degradation; glycolysis; pyruvate from D-glyceraldehyde 3-phosphate: step 4/5. The sequence is that of Enolase 1, chloroplastic (ENO1) from Arabidopsis thaliana (Mouse-ear cress).